The chain runs to 313 residues: Porphobilinogen deaminase (313 aa).

Residue Cys242 is modified to S-(dipyrrolylmethanemethyl)cysteine.

It belongs to the HMBS family. As to quaternary structure, monomer. Requires dipyrromethane as cofactor.

It carries out the reaction 4 porphobilinogen + H2O = hydroxymethylbilane + 4 NH4(+). It functions in the pathway porphyrin-containing compound metabolism; protoporphyrin-IX biosynthesis; coproporphyrinogen-III from 5-aminolevulinate: step 2/4. Tetrapolymerization of the monopyrrole PBG into the hydroxymethylbilane pre-uroporphyrinogen in several discrete steps. The protein is Porphobilinogen deaminase of Klebsiella pneumoniae subsp. pneumoniae (strain ATCC 700721 / MGH 78578).